A 64-amino-acid chain; its full sequence is uncharacterized protein (64 aa).

This is an uncharacterized protein from Escherichia phage lambda (Bacteriophage lambda).